We begin with the raw amino-acid sequence, 252 residues long: 5'-nucleotidase SurE (252 aa).

Asp8, Asp9, Ser39, and Asn91 together coordinate a divalent metal cation.

The protein belongs to the SurE nucleotidase family. The cofactor is a divalent metal cation.

It localises to the cytoplasm. The enzyme catalyses a ribonucleoside 5'-phosphate + H2O = a ribonucleoside + phosphate. Its function is as follows. Nucleotidase that shows phosphatase activity on nucleoside 5'-monophosphates. This is 5'-nucleotidase SurE from Bordetella pertussis (strain Tohama I / ATCC BAA-589 / NCTC 13251).